Here is a 356-residue protein sequence, read N- to C-terminus: Guanine nucleotide-binding protein alpha-15 subunit (356 aa).

Gly-2 carries N-myristoyl glycine lipidation. Residue Cys-5 is the site of S-palmitoyl cysteine attachment. Positions 33-356 (GNQKLLLLGT…GRNLRGTGME (324 aa)) constitute a G-alpha domain. Residues 36-49 (KLLLLGTGECGKST) form a G1 motif region. Residues 41 to 48 (GTGECGKS), 177 to 183 (LRIRIPT), 202 to 206 (DVGGQ), 271 to 274 (NKRD), and Ala-328 contribute to the GTP site. Residues Ser-48 and Thr-183 each contribute to the Mg(2+) site. Positions 175–183 (DMLRIRIPT) are G2 motif. Residues 198-207 (FRIFDVGGQR) form a G3 motif region. A G4 motif region spans residues 267–274 (ILFLNKRD). The tract at residues 326 to 331 (TCATDT) is G5 motif.

Belongs to the G-alpha family. G proteins are composed of 3 units; alpha, beta and gamma. The alpha chain contains the guanine nucleotide binding site.

Functionally, guanine nucleotide-binding proteins (G proteins) are involved as modulators or transducers in various transmembrane signaling systems. This Caenorhabditis briggsae protein is Guanine nucleotide-binding protein alpha-15 subunit (gpa-15).